The primary structure comprises 1407 residues: DNA-directed RNA polymerase subunit beta' (1407 aa).

The Zn(2+) site is built by Cys-70, Cys-72, Cys-85, and Cys-88. Residues Asp-458, Asp-460, and Asp-462 each contribute to the Mg(2+) site. Zn(2+) is bound by residues Cys-814, Cys-888, Cys-895, and Cys-898.

This sequence belongs to the RNA polymerase beta' chain family. In terms of assembly, the RNAP catalytic core consists of 2 alpha, 1 beta, 1 beta' and 1 omega subunit. When a sigma factor is associated with the core the holoenzyme is formed, which can initiate transcription. The cofactor is Mg(2+). Zn(2+) is required as a cofactor.

The enzyme catalyses RNA(n) + a ribonucleoside 5'-triphosphate = RNA(n+1) + diphosphate. In terms of biological role, DNA-dependent RNA polymerase catalyzes the transcription of DNA into RNA using the four ribonucleoside triphosphates as substrates. This Leptothrix cholodnii (strain ATCC 51168 / LMG 8142 / SP-6) (Leptothrix discophora (strain SP-6)) protein is DNA-directed RNA polymerase subunit beta'.